The sequence spans 134 residues: MVTLFLSPSCTSCRKARAWLVKHEVDFQEHNIITSPLSRDELMSILSFTENGTEDIISTRSKVFQKLDIDVEELSISDLIDLIAKNPSLLRRPIIMDQKRMQIGFNEDEIRAFLSRDYRKQELRQATIKAEIEG.

A disulfide bond links Cys-10 and Cys-13.

The protein belongs to the ArsC family. Spx subfamily. Interacts with the C-terminal domain of the alpha subunit of the RNAP.

Its subcellular location is the cytoplasm. Its function is as follows. Global transcriptional regulator that plays a key role in stress response and exerts either positive or negative regulation of genes. Acts by interacting with the C-terminal domain of the alpha subunit of the RNA polymerase (RNAP). This interaction can enhance binding of RNAP to the promoter region of target genes and stimulate their transcription, or block interaction of RNAP with activator. The polypeptide is Global transcriptional regulator Spx (Streptococcus pyogenes serotype M1).